Here is a 355-residue protein sequence, read N- to C-terminus: Peptide chain release factor 1 (355 aa).

N5-methylglutamine is present on Gln230.

This sequence belongs to the prokaryotic/mitochondrial release factor family. Methylated by PrmC. Methylation increases the termination efficiency of RF1.

It localises to the cytoplasm. Functionally, peptide chain release factor 1 directs the termination of translation in response to the peptide chain termination codons UAG and UAA. The protein is Peptide chain release factor 1 of Geotalea uraniireducens (strain Rf4) (Geobacter uraniireducens).